The sequence spans 209 residues: Uracil phosphoribosyltransferase (209 aa).

Residues Arg-79, Arg-104, and 131–139 (DPMLATGGS) each bind 5-phospho-alpha-D-ribose 1-diphosphate. Residues Ile-194 and 199–201 (GDA) each bind uracil. Asp-200 lines the 5-phospho-alpha-D-ribose 1-diphosphate pocket.

The protein belongs to the UPRTase family. It depends on Mg(2+) as a cofactor.

The enzyme catalyses UMP + diphosphate = 5-phospho-alpha-D-ribose 1-diphosphate + uracil. Its pathway is pyrimidine metabolism; UMP biosynthesis via salvage pathway; UMP from uracil: step 1/1. Its activity is regulated as follows. Allosterically activated by GTP. In terms of biological role, catalyzes the conversion of uracil and 5-phospho-alpha-D-ribose 1-diphosphate (PRPP) to UMP and diphosphate. In Clostridium botulinum (strain Alaska E43 / Type E3), this protein is Uracil phosphoribosyltransferase.